The sequence spans 150 residues: 3-dehydroquinate dehydratase (150 aa).

Catalysis depends on tyrosine 26, which acts as the Proton acceptor. Positions 77, 83, and 90 each coordinate substrate. Residue histidine 103 is the Proton donor of the active site. Substrate-binding positions include 104 to 105 (LS) and arginine 114.

Belongs to the type-II 3-dehydroquinase family. Homododecamer.

It catalyses the reaction 3-dehydroquinate = 3-dehydroshikimate + H2O. The protein operates within metabolic intermediate biosynthesis; chorismate biosynthesis; chorismate from D-erythrose 4-phosphate and phosphoenolpyruvate: step 3/7. Its function is as follows. Catalyzes a trans-dehydration via an enolate intermediate. In Sodalis glossinidius (strain morsitans), this protein is 3-dehydroquinate dehydratase.